Reading from the N-terminus, the 448-residue chain is MNINTVPELIGRGSASITPGYMSGFKNSFETEALPGALPIGRNSPQRCAYGLYAEQLSGSPFTAPRGSNERSWLYRIRPSVKHSGRFAKADVGLWRTAPCHEHEMPIAQLRWDPPPLPQHEQTFLQGVVTMTTAGDANTQAGMAAHIYLITASMVDQAFYNADGELMFVPQQGSLRFVTEFGRIDAGPGEIVVIPRGVKFRVELTGGPARGYLCENYGGAFTLPERGPIGANCLANARDFLTPVAAYEDKDTPTELFVKWGGTLWATTLPYSPIDVVAWHGNYAPYKYDLRTFSPVGAIGFDHPDPSIFTVLTAPSETPGTANIDFVIFPERWMVADNTFRPPWYHMNIMSEFMGLIYGVYDAKPQGFVPGGASLHNMMLPHGPDREAFDHASNGELKPTKLTGTMAFMFETRYPQRVTEYAATSGLLQPDYADCWTGLEKRFDPTRP.

His303 functions as the Proton acceptor in the catalytic mechanism. Residues His346 and Glu352 each contribute to the Fe cation site. Homogentisate-binding residues include Tyr361 and His382. His382 lines the Fe cation pocket.

Belongs to the homogentisate dioxygenase family. In terms of assembly, hexamer; dimer of trimers. The cofactor is Fe cation.

The catalysed reaction is homogentisate + O2 = 4-maleylacetoacetate + H(+). It functions in the pathway amino-acid degradation; L-phenylalanine degradation; acetoacetate and fumarate from L-phenylalanine: step 4/6. Functionally, involved in the catabolism of homogentisate (2,5-dihydroxyphenylacetate or 2,5-OH-PhAc), a central intermediate in the degradation of phenylalanine and tyrosine. Catalyzes the oxidative ring cleavage of the aromatic ring of homogentisate to yield maleylacetoacetate. This Rhodopseudomonas palustris (strain BisA53) protein is Homogentisate 1,2-dioxygenase.